The following is a 204-amino-acid chain: Translation initiation factor IF-3 (204 aa).

The tract at residues Val-169–Ala-204 is disordered.

The protein belongs to the IF-3 family. Monomer.

The protein localises to the cytoplasm. Functionally, IF-3 binds to the 30S ribosomal subunit and shifts the equilibrium between 70S ribosomes and their 50S and 30S subunits in favor of the free subunits, thus enhancing the availability of 30S subunits on which protein synthesis initiation begins. This is Translation initiation factor IF-3 from Deinococcus geothermalis (strain DSM 11300 / CIP 105573 / AG-3a).